The following is a 291-amino-acid chain: 4-diphosphocytidyl-2-C-methyl-D-erythritol kinase (291 aa).

Lysine 19 is an active-site residue. 102–112 (PMGGGIGGGSS) is a binding site for ATP. Aspartate 144 is an active-site residue.

This sequence belongs to the GHMP kinase family. IspE subfamily.

It catalyses the reaction 4-CDP-2-C-methyl-D-erythritol + ATP = 4-CDP-2-C-methyl-D-erythritol 2-phosphate + ADP + H(+). It functions in the pathway isoprenoid biosynthesis; isopentenyl diphosphate biosynthesis via DXP pathway; isopentenyl diphosphate from 1-deoxy-D-xylulose 5-phosphate: step 3/6. In terms of biological role, catalyzes the phosphorylation of the position 2 hydroxy group of 4-diphosphocytidyl-2C-methyl-D-erythritol. This chain is 4-diphosphocytidyl-2-C-methyl-D-erythritol kinase, found in Ectopseudomonas mendocina (strain ymp) (Pseudomonas mendocina).